A 483-amino-acid chain; its full sequence is MEAKVTTLMVQGTTSDAGKSVLVAGLCRVLARKGVNVAPFKPQNMALNSAVTKEGGEIGRAQAVQAQACRIEPSVHMNPVLIKPNSDTGAQIILQGKALTNMDAYGFHNYKKVAMDTVMDSFARLKDEYQAIMIEGAGSPAEINLRQNDIANMGFAEEADVPVIIVADIDRGGVFAHLYGTLALLSPSEQARVKGFVINRFRGDIKLLESGLDWLEEKTGKPVIGVLPFLHGLNLEAEDAITSQQELSGEVKLKVVVPVLTRISNHTDFDVLRLHPQIDLRYVGKGERLEHADLIILPGSKSVRDDLRYLREQGWDKDILRHLRFGGKVLGICGGYQMLGESISDPFGVEGEPGESVGLGLLKTRTELTQDKCLINTKGQLSLNGKHVNVTGYEIHVGRSQVNEYQPITNDDGQLEGALSECGQIMGSYLHGFLDSEAVLELICEWVNGVRIKAQNHQQLKEQAIDRIADAIEEHLDLSQLGI.

Residues K252 to V439 enclose the GATase cobBQ-type domain. The Nucleophile role is filled by C333. H431 is a catalytic residue.

This sequence belongs to the CobB/CobQ family. CobQ subfamily.

Its pathway is cofactor biosynthesis; adenosylcobalamin biosynthesis. In terms of biological role, catalyzes amidations at positions B, D, E, and G on adenosylcobyrinic A,C-diamide. NH(2) groups are provided by glutamine, and one molecule of ATP is hydrogenolyzed for each amidation. The polypeptide is Cobyric acid synthase (Vibrio vulnificus (strain CMCP6)).